The primary structure comprises 739 residues: Potassium transporter 26 (739 aa).

The Cytoplasmic portion of the chain corresponds to 1-81; the sequence is MEYHHRPHSP…RQVALLSFQS (81 aa). Residues 82–102 form a helical membrane-spanning segment; the sequence is LGVVYGDLGTSPLYVFSSISL. At 103-112 the chain is on the extracellular side; the sequence is DDPGEADFVG. A helical transmembrane segment spans residues 113-133; it reads ILSIILWTFTMICLVKYVFIV. At 134–198 the chain is on the cytoplasmic side; that stretch reads LKADDHGEGG…KFLEQSTKWQ (65 aa). Residues 199 to 219 form a helical membrane-spanning segment; it reads AVITYIVLAGTCMVLGDGALT. Residues 220 to 236 lie on the Extracellular side of the membrane; it reads PAISVLSAVQGIQSRSS. The helical transmembrane segment at 237–257 threads the bilayer; sequence SITQAHVVLLSVIILFILFFF. Residues 258–268 lie on the Cytoplasmic side of the membrane; that stretch reads QKHGTSKVSFT. The chain crosses the membrane as a helical span at residues 269-289; the sequence is FSPIMILWFTFVAFIGLYNII. The Extracellular segment spans residues 290–318; it reads KHYPPILKAVSPHYIIIYFIRNKRAAWET. Residues 319–339 form a helical membrane-spanning segment; that stretch reads LGAIVLCITGAEAMFADLGHF. Topologically, residues 340 to 347 are cytoplasmic; that stretch reads NKSSIQMA. The helical transmembrane segment at 348–368 threads the bilayer; sequence FSVIVYPSMILAYAGQAAFLV. At 369–385 the chain is on the extracellular side; that stretch reads KNPSKLSTTFYSSTPEP. A helical membrane pass occupies residues 386-406; the sequence is LFWPMFIIATLAAIVASQALI. Residues 407-437 are Cytoplasmic-facing; sequence SASFSIIRQSIALGCFPRVTMKHTSGKHEGQ. A helical membrane pass occupies residues 438–458; it reads VYSPEINYFLMVACILITVGF. The Extracellular portion of the chain corresponds to 459-469; sequence KGGPEIGQAFG. The chain crosses the membrane as a helical span at residues 470 to 490; that stretch reads VAVIFVMLFTTNLMTVVMLII. Over 491 to 494 the chain is Cytoplasmic; sequence WESN. The chain crosses the membrane as a helical span at residues 495 to 515; that stretch reads IALASLFFVFFFSIEGIYMTS. The Extracellular segment spans residues 516-519; sequence LMNK. Residues 520 to 540 form a helical membrane-spanning segment; that stretch reads ILQGGWVPFAITAFFLIITLS. Residues 541–739 lie on the Cytoplasmic side of the membrane; that stretch reads WTYGRSKKGE…TLQVGMLYEI (199 aa).

This sequence belongs to the HAK/KUP transporter (TC 2.A.72.3) family.

The protein resides in the membrane. Functionally, high-affinity potassium transporter. The sequence is that of Potassium transporter 26 (HAK26) from Oryza sativa subsp. japonica (Rice).